The following is a 240-amino-acid chain: MNESNSQDLTRVSPFYIKEGFSVYEFTEKLFEAYVIERINRFLVKVTLDGEEILVHLHDPGRLKELIYPGNLVLIRETKGNKTKFSITAAYANSRFIVLDSRLHNIIASKFIPKIYEKEVKVGNSRIDFKYDNTYLEVKGCTLVENEIAYFPDAPTERGRKHLKELRELMRKGFNAILLILVMRNDAKCFLPNEKTDPKFSVEFWDSIKEGLKVYIKTFSLIGNKIVYVGDIPLCKTNLT.

This sequence belongs to the SfsA family.

This chain is Sugar fermentation stimulation protein homolog, found in Saccharolobus solfataricus (strain ATCC 35092 / DSM 1617 / JCM 11322 / P2) (Sulfolobus solfataricus).